Here is a 314-residue protein sequence, read N- to C-terminus: tRNA pseudouridine synthase B (314 aa).

Histidine 43 contributes to the substrate binding site. Aspartate 48 functions as the Nucleophile in the catalytic mechanism. Substrate-binding residues include tyrosine 76, tyrosine 179, and leucine 200.

This sequence belongs to the pseudouridine synthase TruB family. Type 1 subfamily.

The enzyme catalyses uridine(55) in tRNA = pseudouridine(55) in tRNA. Its function is as follows. Responsible for synthesis of pseudouridine from uracil-55 in the psi GC loop of transfer RNAs. The sequence is that of tRNA pseudouridine synthase B from Shigella boydii serotype 4 (strain Sb227).